Here is a 461-residue protein sequence, read N- to C-terminus: Phosphoglucosamine mutase (461 aa).

S107 (phosphoserine intermediate) is an active-site residue. Mg(2+) contacts are provided by S107, D254, D256, and D258. S107 carries the post-translational modification Phosphoserine.

It belongs to the phosphohexose mutase family. Requires Mg(2+) as cofactor. In terms of processing, activated by phosphorylation.

The enzyme catalyses alpha-D-glucosamine 1-phosphate = D-glucosamine 6-phosphate. Its function is as follows. Catalyzes the conversion of glucosamine-6-phosphate to glucosamine-1-phosphate. In Bifidobacterium longum (strain DJO10A), this protein is Phosphoglucosamine mutase.